Reading from the N-terminus, the 874-residue chain is Ectonucleotide pyrophosphatase/phosphodiesterase family member 3 (874 aa).

Over 1 to 11 the chain is Cytoplasmic; sequence MDSRLALATEE. A helical; Signal-anchor for type II membrane protein membrane pass occupies residues 12–30; sequence PIKKDSLKKYKILCVVLLA. The Extracellular segment spans residues 31–874; that stretch reads LLVIVSLGLG…TYLPTFETII (844 aa). SMB domains are found at residues 51 to 93 and 94 to 138; these read QGSC…VKST and QIWT…GESP. Cystine bridges form between C54–C58, C54–C71, C58–C89, C69–C71, C69–C82, C75–C81, C82–C89, C98–C115, C103–C133, C113–C126, C119–C125, C144–C190, and C152–C364. Residues 78–80 carry the Cell attachment site motif; that stretch reads RGD. Residues 160-544 form a phosphodiesterase region; sequence PVILFSMDGF…HGSLNHLLKT (385 aa). Residue D167 participates in Zn(2+) binding. K204 provides a ligand contact to ATP. T205 lines the Zn(2+) pocket. T205 functions as the Nucleophile in the catalytic mechanism. An ATP-binding site is contributed by N226. N-linked (GlcNAc...) asparagine glycosylation occurs at N236. D275 is an ATP binding site. N-linked (GlcNAc...) asparagine glycosylation is found at N279 and N288. Y289 is a binding site for ATP. 4 residues coordinate Zn(2+): D325, H329, D372, and H373. Disulfide bonds link C380/C477, C428/C817, C561/C623, C574/C679, C576/C664, and C786/C796. N425 carries an N-linked (GlcNAc...) asparagine glycan. H482 serves as a coordination point for Zn(2+). N-linked (GlcNAc...) asparagine glycans are attached at residues N532, N594, N687, and N701. Residues 581 to 874 form a nuclease region; that stretch reads NTPGLEEQAN…TYLPTFETII (294 aa). Residues D751, N753, D755, H757, and D759 each coordinate Ca(2+). N820 carries an N-linked (GlcNAc...) asparagine glycan.

In terms of assembly, monomer and homodimer. It depends on Zn(2+) as a cofactor. N-glycosylated. N-glycosylation is necessary for normal transport to the cell membrane, but is not the apical targeting signal. In terms of tissue distribution, detected at the tip of villi in the small intestine. Detected on basophils and mast cells (at protein level). Detected in the epithelial layer of the small intestine; expression is higher in the proximal part and lower in the distal part of the small intestine.

Its subcellular location is the cell membrane. The protein resides in the apical cell membrane. The protein localises to the secreted. It carries out the reaction a ribonucleoside 5'-triphosphate + H2O = a ribonucleoside 5'-phosphate + diphosphate + H(+). It catalyses the reaction UDP-N-acetyl-alpha-D-glucosamine + H2O = N-acetyl-alpha-D-glucosamine 1-phosphate + UMP + 2 H(+). The catalysed reaction is ATP + H2O = AMP + diphosphate + H(+). The enzyme catalyses CTP + H2O = CMP + diphosphate + H(+). It carries out the reaction GTP + H2O = GMP + diphosphate + H(+). It catalyses the reaction UTP + H2O = UMP + diphosphate + H(+). The catalysed reaction is Hydrolytically removes 5'-nucleotides successively from the 3'-hydroxy termini of 3'-hydroxy-terminated oligonucleotides.. The enzyme catalyses P(1),P(3)-bis(5'-adenosyl) triphosphate + H2O = AMP + ADP + 2 H(+). It carries out the reaction P(1),P(4)-bis(5'-adenosyl) tetraphosphate + H2O = AMP + ATP + 2 H(+). It catalyses the reaction P(1),P(5)-bis(5'-adenosyl) pentaphosphate + H2O = adenosine 5'-tetraphosphate + AMP + 2 H(+). The catalysed reaction is P(1),P(4)-bis(5'-guanosyl) tetraphosphate + H2O = GMP + GTP + 2 H(+). Its function is as follows. Hydrolase that metabolizes extracellular nucleotides, including ATP, GTP, UTP and CTP. Limits mast cells and basophils response during inflammation and during the chronic phases of allergic responses by eliminating extracellular ATP, a signaling molecule activating these cells in an autocrine manner. Metabolizes extracellular ATP in the lumen of the small intestine, and thereby prevents ATP-induced apoptosis of intestinal plasmacytoid dendritic cells. Has a broad specificity and can also hydrolyze UDP-GlcNAc into UMP and GlcNAc-1-phosphate and potentially several other intracellular nucleotide sugars, including UDP-GalNAc, CMP-NeuAc, GDP-Fuc, and UDP-GlcA. Thereby, could modulate glycan biosynthesis and protein glycosylation. Can hydrolyze extracellular dinucleoside polyphosphates, including the vasoactive adenosine polyphosphates as well. In addition, displays an alkaline phosphodiesterase activity in vitro. The protein is Ectonucleotide pyrophosphatase/phosphodiesterase family member 3 of Mus musculus (Mouse).